We begin with the raw amino-acid sequence, 742 residues long: Glucosylceramidase (742 aa).

Residues N37 and N160 are each glycosylated (N-linked (GlcNAc...) asparagine). E258 acts as the Proton donor in catalysis. An N-linked (GlcNAc...) asparagine glycan is attached at N388. The active-site Nucleophile is the E492. N-linked (GlcNAc...) asparagine glycans are attached at residues N552, N560, and N698. The chain crosses the membrane as a helical span at residues 701 to 721 (IAQILVAVVILLLGVLVAYYA).

The protein belongs to the glycosyl hydrolase 5 (cellulase A) family.

Its subcellular location is the membrane. The catalysed reaction is a beta-D-glucosyl-(1&lt;-&gt;1')-N-acylsphing-4-enine + H2O = an N-acylsphing-4-enine + D-glucose. In terms of biological role, specifically hydrolyzes the glucosidic linkage in glucosylceramide. May prevent accumulation of aberrent glucosylceramide containing immature ceramide. This chain is Glucosylceramidase, found in Cryptococcus neoformans var. grubii serotype A (strain H99 / ATCC 208821 / CBS 10515 / FGSC 9487) (Filobasidiella neoformans var. grubii).